An 88-amino-acid polypeptide reads, in one-letter code: UPF0250 protein Swoo_3713 (88 aa).

It belongs to the UPF0250 family.

In Shewanella woodyi (strain ATCC 51908 / MS32), this protein is UPF0250 protein Swoo_3713.